The primary structure comprises 702 residues: Archaeal Lon protease (702 aa).

Residues 1–63 (MSNESTNDAP…VGVEGDVSID (63 aa)) are disordered. Residues 1 to 183 (MSNESTNDAP…EARKRNQMRS (183 aa)) are Cytoplasmic-facing. A compositionally biased stretch (acidic residues) spans 10–48 (PPDDDPDDPEPSVDHDDTDGLQDDPADSVDDAGEVDDLE). 117–124 (GSPGTGKS) contacts ATP. A helical membrane pass occupies residues 184-201 (FLMWIMILLAVGYALLIA). Over 202–206 (TPARP) the chain is Extracellular. The helical transmembrane segment at 207–223 (LLALLSAAGIYLLFRYT) threads the bilayer. Over 224 to 702 (NRGSDAMVPK…GTTGGNPSPQ (479 aa)) the chain is Cytoplasmic. The Lon proteolytic domain occupies 487 to 667 (EEAVGRVNGL…SEVLDVALVG (181 aa)). Catalysis depends on residues serine 574 and lysine 617.

The protein belongs to the peptidase S16 family. Archaeal LonB subfamily. Homohexamer. Organized in a ring with a central cavity.

It is found in the cell membrane. ATP-dependent serine protease that mediates the selective degradation of mutant and abnormal proteins as well as certain short-lived regulatory proteins. Degrades polypeptides processively. This chain is Archaeal Lon protease, found in Halobacterium salinarum (strain ATCC 700922 / JCM 11081 / NRC-1) (Halobacterium halobium).